Consider the following 164-residue polypeptide: Transcription antitermination protein NusB (164 aa).

A disordered region spans residues 144-164; that stretch reads KNGRGLIDHTPPRAAKTDAKS. Over residues 149 to 164 the composition is skewed to basic and acidic residues; that stretch reads LIDHTPPRAAKTDAKS.

The protein belongs to the NusB family.

Its function is as follows. Involved in transcription antitermination. Required for transcription of ribosomal RNA (rRNA) genes. Binds specifically to the boxA antiterminator sequence of the ribosomal RNA (rrn) operons. The chain is Transcription antitermination protein NusB from Chlorobium phaeovibrioides (strain DSM 265 / 1930) (Prosthecochloris vibrioformis (strain DSM 265)).